A 269-amino-acid polypeptide reads, in one-letter code: Bifunctional protein FolD (269 aa).

Residues 149 to 151 (GLG) and valine 215 each bind NADP(+).

This sequence belongs to the tetrahydrofolate dehydrogenase/cyclohydrolase family. As to quaternary structure, homodimer.

The catalysed reaction is (6R)-5,10-methylene-5,6,7,8-tetrahydrofolate + NADP(+) = (6R)-5,10-methenyltetrahydrofolate + NADPH. It carries out the reaction (6R)-5,10-methenyltetrahydrofolate + H2O = (6R)-10-formyltetrahydrofolate + H(+). Its pathway is one-carbon metabolism; tetrahydrofolate interconversion. Functionally, catalyzes the oxidation of 5,10-methylenetetrahydrofolate to 5,10-methenyltetrahydrofolate and then the hydrolysis of 5,10-methenyltetrahydrofolate to 10-formyltetrahydrofolate. This Mycoplasma pneumoniae (strain ATCC 29342 / M129 / Subtype 1) (Mycoplasmoides pneumoniae) protein is Bifunctional protein FolD.